A 756-amino-acid chain; its full sequence is Catalase-peroxidase (756 aa).

A signal peptide spans 1–26; that stretch reads MKGKTVNKQTLAALVSALLVFNPAVA. The segment at residues 126-248 is a cross-link (tryptophyl-tyrosyl-methioninium (Trp-Tyr) (with M-274)); sequence WHSAGTYRTL…LGATHMGLIY (123 aa). Histidine 127 functions as the Proton acceptor in the catalytic mechanism. The tryptophyl-tyrosyl-methioninium (Tyr-Met) (with W-126) cross-link spans 248 to 274; the sequence is YVNPEGPKGVPDPLGSAKNIRTAFSRM. A heme b-binding site is contributed by histidine 289.

Belongs to the peroxidase family. Peroxidase/catalase subfamily. As to quaternary structure, homodimer or homotetramer. The cofactor is heme b. Formation of the three residue Trp-Tyr-Met cross-link is important for the catalase, but not the peroxidase activity of the enzyme.

The catalysed reaction is H2O2 + AH2 = A + 2 H2O. It carries out the reaction 2 H2O2 = O2 + 2 H2O. In terms of biological role, bifunctional enzyme with both catalase and broad-spectrum peroxidase activity. This is Catalase-peroxidase from Shewanella loihica (strain ATCC BAA-1088 / PV-4).